Here is a 1337-residue protein sequence, read N- to C-terminus: DNA mismatch repair protein Msh6 (1337 aa).

Positions 68–130 (PGDLVWAKME…IKYLRPYKGS (63 aa)) constitute a PWWP domain. Residues 170–310 (AVCSEPSDTE…SEAPKRAAPV (141 aa)) are disordered. A compositionally biased stretch (acidic residues) spans 176 to 187 (SDTEEAEEEEME). Basic and acidic residues predominate over residues 226–248 (VLDSDSDRDGSDVEFKPDVKEAS). Residues 257-272 (DENEATDVETDEESIE) show a composition bias toward acidic residues. A compositionally biased stretch (basic residues) spans 279–292 (PSKRKRGNVSKPSK). Positions 294–305 (SSLENEHSEAPK) are enriched in basic and acidic residues. ATP is bound at residue 1111–1118 (GPNMGGKS).

It belongs to the DNA mismatch repair MutS family.

The protein localises to the nucleus. Its function is as follows. Component of the post-replicative DNA mismatch repair system (MMR). Involved in B cell growth by positively regulating B cell proliferation and controlling replication efficiency. Controls cell cycle to prevent re-replication and defects in DNA damage-induced G2 checkpoint. Doesn't seem to counteract or control the immunoglobulin gene conversion (Ig GC) and to contribute to guanine/uracil mismatch repair. The polypeptide is DNA mismatch repair protein Msh6 (Gallus gallus (Chicken)).